A 278-amino-acid polypeptide reads, in one-letter code: Biotin synthase (278 aa).

Residues 1–227 (MQIMLCAISN…QSVVMVAGGR (227 aa)) enclose the Radical SAM core domain. Residues cysteine 16, cysteine 20, and cysteine 23 each contribute to the [4Fe-4S] cluster site. Cysteine 60, cysteine 95, and cysteine 153 together coordinate [2Fe-2S] cluster.

It belongs to the radical SAM superfamily. Biotin synthase family. In terms of assembly, homodimer. [4Fe-4S] cluster serves as cofactor. Requires [2Fe-2S] cluster as cofactor.

The enzyme catalyses (4R,5S)-dethiobiotin + (sulfur carrier)-SH + 2 reduced [2Fe-2S]-[ferredoxin] + 2 S-adenosyl-L-methionine = (sulfur carrier)-H + biotin + 2 5'-deoxyadenosine + 2 L-methionine + 2 oxidized [2Fe-2S]-[ferredoxin]. It participates in cofactor biosynthesis; biotin biosynthesis; biotin from 7,8-diaminononanoate: step 2/2. Functionally, catalyzes the conversion of dethiobiotin (DTB) to biotin by the insertion of a sulfur atom into dethiobiotin via a radical-based mechanism. The sequence is that of Biotin synthase from Campylobacter jejuni subsp. doylei (strain ATCC BAA-1458 / RM4099 / 269.97).